We begin with the raw amino-acid sequence, 292 residues long: Lipoyl synthase (292 aa).

[4Fe-4S] cluster is bound by residues Cys-38, Cys-43, Cys-49, Cys-64, Cys-68, Cys-71, and Ser-277. In terms of domain architecture, Radical SAM core spans 50–266 (WSKGTATFLL…REIALDAGFR (217 aa)).

This sequence belongs to the radical SAM superfamily. Lipoyl synthase family. It depends on [4Fe-4S] cluster as a cofactor.

The protein resides in the cytoplasm. The enzyme catalyses [[Fe-S] cluster scaffold protein carrying a second [4Fe-4S](2+) cluster] + N(6)-octanoyl-L-lysyl-[protein] + 2 oxidized [2Fe-2S]-[ferredoxin] + 2 S-adenosyl-L-methionine + 4 H(+) = [[Fe-S] cluster scaffold protein] + N(6)-[(R)-dihydrolipoyl]-L-lysyl-[protein] + 4 Fe(3+) + 2 hydrogen sulfide + 2 5'-deoxyadenosine + 2 L-methionine + 2 reduced [2Fe-2S]-[ferredoxin]. The protein operates within protein modification; protein lipoylation via endogenous pathway; protein N(6)-(lipoyl)lysine from octanoyl-[acyl-carrier-protein]: step 2/2. Functionally, catalyzes the radical-mediated insertion of two sulfur atoms into the C-6 and C-8 positions of the octanoyl moiety bound to the lipoyl domains of lipoate-dependent enzymes, thereby converting the octanoylated domains into lipoylated derivatives. This chain is Lipoyl synthase, found in Chlorobaculum parvum (strain DSM 263 / NCIMB 8327) (Chlorobium vibrioforme subsp. thiosulfatophilum).